We begin with the raw amino-acid sequence, 118 residues long: Large ribosomal subunit protein uL22 (118 aa).

The protein belongs to the universal ribosomal protein uL22 family. In terms of assembly, part of the 50S ribosomal subunit.

Functionally, this protein binds specifically to 23S rRNA; its binding is stimulated by other ribosomal proteins, e.g. L4, L17, and L20. It is important during the early stages of 50S assembly. It makes multiple contacts with different domains of the 23S rRNA in the assembled 50S subunit and ribosome. Its function is as follows. The globular domain of the protein is located near the polypeptide exit tunnel on the outside of the subunit, while an extended beta-hairpin is found that lines the wall of the exit tunnel in the center of the 70S ribosome. The protein is Large ribosomal subunit protein uL22 of Listeria innocua serovar 6a (strain ATCC BAA-680 / CLIP 11262).